Here is a 194-residue protein sequence, read N- to C-terminus: MKQKRPKYMQIIDAAVEVIAENGYHQSQVSKIAKQAGVADGTIYLYFKNKEDILISLFKEKMGQFIERMEEDIKEKATAKEKLALVISKHFSLLAGDHNLAIVTQLELRQSNLELRQKINEILKGYLNILDGILTEGIQSGEIKEGLDVRLARQMIFGTIDETVTTWVMNDQKYDLVALSNSVLELLVSGIHNK.

The region spanning 5–65 (RPKYMQIIDA…SLFKEKMGQF (61 aa)) is the HTH tetR-type domain. A DNA-binding region (H-T-H motif) is located at residues 28 to 47 (QVSKIAKQAGVADGTIYLYF).

As to quaternary structure, homodimer. Binds to DNA.

It is found in the cytoplasm. Transcriptional regulator in fatty acid degradation. Represses transcription of genes required for fatty acid transport and beta-oxidation, including acdA, fadA, fadB, fadE, fadF, fadG, fadH, fadM, fadN, lcfA and lcfB. Binding of FadR to DNA is specifically inhibited by long chain fatty acyl-CoA compounds of 14-20 carbon atoms in length. The sequence is that of Fatty acid metabolism regulator protein (fadR) from Bacillus subtilis (strain 168).